The primary structure comprises 286 residues: MNIMIALIPALLWGTVPLIITKFGGSTRQQTMGMTLGALTFAVIVFFFTDPVYTLKTVGISFITGCLWTVGQMFQLQAFKIIGVSKAMPISTGMQLVGTTLCGVILFHEWDTTLRIILGFIALALIVGGIFLTSYAEKEEDGTNALKQGLITLFISACGYVGLVVLIQGFKIDGINAILPQAIGMVISALIMTHSGGTEKRFNKRTLLLTIPGVIWAAGNVAMVHANQLVGVATGFSLSQLGVVISTIGGIILLKEKKTQKEMLFVIVGVVLVVLGGILIGVAKGA.

8 helical membrane-spanning segments follow: residues 4 to 26 (MIAL…FGGS), 33 to 55 (GMTL…VYTL), 114 to 136 (LRII…TSYA), 149 to 167 (GLIT…VVLI), 177 to 194 (AILP…IMTH), 207 to 226 (LLLT…MVHA), 230 to 252 (VGVA…GGII), and 264 to 283 (LFVI…IGVA).

This sequence belongs to the GRP transporter (TC 2.A.7.5) family.

The protein localises to the cell membrane. This is Putative sugar uptake protein lmo0176 from Listeria monocytogenes serovar 1/2a (strain ATCC BAA-679 / EGD-e).